The chain runs to 823 residues: Nuclear factor I family protein (823 aa).

The segment at 1 to 56 (MEPHLKIDVSSASGSTTTGATASTSEAPQDSQAQQTMPPPSSDWSNQFNSPEAVSP) is disordered. Positions 10–25 (SSASGSTTTGATASTS) are enriched in low complexity. The span at 26–52 (EAPQDSQAQQTMPPPSSDWSNQFNSPE) shows a compositional bias: polar residues. The CTF/NF-I DNA-binding region spans 61-253 (IKCFSPYSQE…DVDTKITLTY (193 aa)). Disordered stretches follow at residues 364–408 (PYPI…NDEV), 433–468 (SRTQ…AFRS), and 777–823 (APPA…NEKK). Residues 386–396 (PSEKRSRDISS) show a composition bias toward basic and acidic residues. Polar residues predominate over residues 433–447 (SRTQQNQGAPGTSRQ). Residues 777-794 (APPACSPSSSNSSLGAAN) are compositionally biased toward low complexity.

This sequence belongs to the CTF/NF-I family. Expressed in muscles, neurons and intestinal cells.

The protein localises to the nucleus. Its function is as follows. Probable transcription factor which recognizes and binds the palindromic sequence 5'-TTGGCANNNTGCCAA-3' present in promoters. Plays a role in locomotion, pharyngeal pumping, egg-laying, and life span. In Caenorhabditis elegans, this protein is Nuclear factor I family protein.